The primary structure comprises 1158 residues: ATP-dependent helicase/deoxyribonuclease subunit B (1158 aa).

The protein belongs to the helicase family. AddB/RexB type 2 subfamily. In terms of assembly, heterodimer of AddA and RexB. Requires Mg(2+) as cofactor.

Its function is as follows. The heterodimer acts as both an ATP-dependent DNA helicase and an ATP-dependent, dual-direction single-stranded exonuclease. Recognizes the chi site generating a DNA molecule suitable for the initiation of homologous recombination. This subunit has 5' -&gt; 3' nuclease activity but not helicase activity. The polypeptide is ATP-dependent helicase/deoxyribonuclease subunit B (Lactobacillus johnsonii (strain CNCM I-12250 / La1 / NCC 533)).